A 147-amino-acid chain; its full sequence is Mid1-interacting protein 1-B (147 aa).

It belongs to the SPOT14 family.

The protein resides in the nucleus. It localises to the cytoplasm. It is found in the cytoskeleton. Involved in stabilization of microtubules. May play a role in the regulation of lipogenesis. This chain is Mid1-interacting protein 1-B, found in Danio rerio (Zebrafish).